The primary structure comprises 263 residues: 3-methyl-2-oxobutanoate hydroxymethyltransferase (263 aa).

Mg(2+) is bound by residues Asp-45 and Asp-84. 3-methyl-2-oxobutanoate-binding positions include 45–46 (DS), Asp-84, and Lys-112. Glu-114 contacts Mg(2+). Glu-180 (proton acceptor) is an active-site residue.

The protein belongs to the PanB family. Homodecamer; pentamer of dimers. Requires Mg(2+) as cofactor.

It is found in the cytoplasm. The enzyme catalyses 3-methyl-2-oxobutanoate + (6R)-5,10-methylene-5,6,7,8-tetrahydrofolate + H2O = 2-dehydropantoate + (6S)-5,6,7,8-tetrahydrofolate. It functions in the pathway cofactor biosynthesis; (R)-pantothenate biosynthesis; (R)-pantoate from 3-methyl-2-oxobutanoate: step 1/2. Functionally, catalyzes the reversible reaction in which hydroxymethyl group from 5,10-methylenetetrahydrofolate is transferred onto alpha-ketoisovalerate to form ketopantoate. This chain is 3-methyl-2-oxobutanoate hydroxymethyltransferase, found in Salmonella arizonae (strain ATCC BAA-731 / CDC346-86 / RSK2980).